We begin with the raw amino-acid sequence, 403 residues long: Dual-specificity RNA methyltransferase RlmN (403 aa).

Residues 1–25 (MTKIPMQPADSTPATFHPNAPTKTN) are disordered. E112 functions as the Proton acceptor in the catalytic mechanism. Residues 123 to 364 (VNGRKTLCIS…VCTIRQTRGD (242 aa)) form the Radical SAM core domain. An intrachain disulfide couples C130 to C370. [4Fe-4S] cluster contacts are provided by C137, C141, and C144. Residues 193–194 (GE), S225, 247–249 (SLH), and N327 contribute to the S-adenosyl-L-methionine site. C370 (S-methylcysteine intermediate) is an active-site residue.

This sequence belongs to the radical SAM superfamily. RlmN family. It depends on [4Fe-4S] cluster as a cofactor.

Its subcellular location is the cytoplasm. It carries out the reaction adenosine(2503) in 23S rRNA + 2 reduced [2Fe-2S]-[ferredoxin] + 2 S-adenosyl-L-methionine = 2-methyladenosine(2503) in 23S rRNA + 5'-deoxyadenosine + L-methionine + 2 oxidized [2Fe-2S]-[ferredoxin] + S-adenosyl-L-homocysteine. It catalyses the reaction adenosine(37) in tRNA + 2 reduced [2Fe-2S]-[ferredoxin] + 2 S-adenosyl-L-methionine = 2-methyladenosine(37) in tRNA + 5'-deoxyadenosine + L-methionine + 2 oxidized [2Fe-2S]-[ferredoxin] + S-adenosyl-L-homocysteine. Functionally, specifically methylates position 2 of adenine 2503 in 23S rRNA and position 2 of adenine 37 in tRNAs. m2A2503 modification seems to play a crucial role in the proofreading step occurring at the peptidyl transferase center and thus would serve to optimize ribosomal fidelity. The protein is Dual-specificity RNA methyltransferase RlmN of Psychrobacter sp. (strain PRwf-1).